The sequence spans 342 residues: Flagellar P-ring protein (342 aa).

The N-terminal stretch at 1-19 (MKRVFLWLIFVLAFHKLLA) is a signal peptide.

Belongs to the FlgI family. In terms of assembly, the basal body constitutes a major portion of the flagellar organelle and consists of four rings (L,P,S, and M) mounted on a central rod.

It localises to the periplasm. It is found in the bacterial flagellum basal body. In terms of biological role, assembles around the rod to form the L-ring and probably protects the motor/basal body from shearing forces during rotation. The protein is Flagellar P-ring protein of Helicobacter pylori (strain P12).